A 525-amino-acid polypeptide reads, in one-letter code: GMP synthase [glutamine-hydrolyzing] (525 aa).

The Glutamine amidotransferase type-1 domain occupies arginine 9–leucine 207. Residue cysteine 86 is the Nucleophile of the active site. Catalysis depends on residues histidine 181 and glutamate 183. In terms of domain architecture, GMPS ATP-PPase spans tryptophan 208–arginine 400. Serine 235–serine 241 is a binding site for ATP.

As to quaternary structure, homodimer.

It catalyses the reaction XMP + L-glutamine + ATP + H2O = GMP + L-glutamate + AMP + diphosphate + 2 H(+). It functions in the pathway purine metabolism; GMP biosynthesis; GMP from XMP (L-Gln route): step 1/1. Functionally, catalyzes the synthesis of GMP from XMP. This chain is GMP synthase [glutamine-hydrolyzing], found in Pseudomonas fluorescens (strain Pf0-1).